Consider the following 300-residue polypeptide: Junctional adhesion molecule A (300 aa).

The N-terminal stretch at 1–26 (MGTEGKAGSKLLFLFTSMILGSLVQG) is a signal peptide. At 27 to 238 (KGSVYSPQTA…MEAVELNVGG (212 aa)) the chain is on the extracellular side. Ig-like V-type domains lie at 28–122 (GSVY…GEVS) and 134–228 (PTVS…EAVR). Cystine bridges form between cysteine 49-cysteine 108 and cysteine 152-cysteine 212. An N-linked (GlcNAc...) asparagine glycan is attached at asparagine 185. The helical transmembrane segment at 239–259 (IVAAVLVTLILLGLLIFGIWF) threads the bilayer. Residues 260–300 (AYSRGYFERTKKGTAPGKKVIYSQPSARSEGEFKQTSSFLV) are Cytoplasmic-facing. 3 positions are modified to phosphoserine: serine 282, serine 285, and serine 288.

It belongs to the immunoglobulin superfamily. As to quaternary structure, interacts with the ninth PDZ domain of MPDZ. Interacts with the first PDZ domain of PARD3. The association between PARD3 and PARD6B probably disrupts this interaction. Interacts with ITGAL (via I-domain). Interacts with CD151. In terms of processing, N-glycosylated.

It is found in the cell junction. Its subcellular location is the tight junction. It localises to the cell membrane. Its function is as follows. Seems to play a role in epithelial tight junction formation. Appears early in primordial forms of cell junctions and recruits PARD3. The association of the PARD6-PARD3 complex may prevent the interaction of PARD3 with JAM1, thereby preventing tight junction assembly. Plays a role in regulating monocyte transmigration involved in integrity of epithelial barrier. Ligand for integrin alpha-L/beta-2 involved in memory T-cell and neutrophil transmigration. This Rattus norvegicus (Rat) protein is Junctional adhesion molecule A (F11r).